The sequence spans 771 residues: Topoisomerase 1-associated factor 2 (771 aa).

3 disordered regions span residues 48 to 69, 271 to 330, and 346 to 367; these read NSIN…SIQS, EGVV…ISFD, and SDMH…KSSL. Residues 51-69 are compositionally biased toward low complexity; that stretch reads NNCSDPSPTSPSSQNSIQS. A compositionally biased stretch (polar residues) spans 275–294; sequence TQGSDNNKENIPSSTQQQKN. A compositionally biased stretch (basic and acidic residues) spans 295–307; that stretch reads DGAKRAESKDLDL. Residues 346 to 359 are compositionally biased toward polar residues; it reads SDMHIQYSNPSSGA. Ser397 carries the post-translational modification Phosphoserine. Residue Thr405 is modified to Phosphothreonine. Residues 633–771 form a disordered region; that stretch reads NSKDKVEATS…KYVESDEDDQ (139 aa). Polar residues predominate over residues 640–652; the sequence is ATSNSTAQEQEQV. Positions 690 to 709 are enriched in low complexity; sequence SHSSPSSSSSMSLESSLDSS.

The protein to yeast YJL076w. In terms of assembly, interacts with HPR1.

It localises to the nucleus. This Saccharomyces cerevisiae (strain ATCC 204508 / S288c) (Baker's yeast) protein is Topoisomerase 1-associated factor 2 (TOF2).